Reading from the N-terminus, the 122-residue chain is Large ribosomal subunit protein bL12 (122 aa).

Belongs to the bacterial ribosomal protein bL12 family. As to quaternary structure, homodimer. Part of the ribosomal stalk of the 50S ribosomal subunit. Forms a multimeric L10(L12)X complex, where L10 forms an elongated spine to which 2 to 4 L12 dimers bind in a sequential fashion. Binds GTP-bound translation factors.

Its function is as follows. Forms part of the ribosomal stalk which helps the ribosome interact with GTP-bound translation factors. Is thus essential for accurate translation. The protein is Large ribosomal subunit protein bL12 of Mycoplasma mycoides subsp. mycoides SC (strain CCUG 32753 / NCTC 10114 / PG1).